The sequence spans 154 residues: Troponin C, isoallergen Bla g 6.0301 (154 aa).

4 consecutive EF-hand domains span residues 11-46, 47-82, 87-122, and 123-154; these read EQIS…MGQP, FNRR…FIIE, AMEK…LDEQ, and LTSD…MMTG. Residues Asp-60, Asp-62, Ser-64, Arg-66, and Glu-71 each contribute to the Ca(2+) site. Residues Asp-136, Asp-138, Ser-140, Thr-142, and Glu-147 each coordinate Ca(2+).

It belongs to the troponin C family.

Functionally, troponin is the central regulatory protein of striated muscle contraction. It consists of three components: Troponin-I (Tn-I) which is the inhibitor of actomyosin ATPase, Troponin-T (Tn-T) which contains the binding site for tropomyosin and Troponin-C (Tn-C). The binding of calcium to Tn-C abolishes the inhibitory action of Tn on actin filaments. The sequence is that of Troponin C, isoallergen Bla g 6.0301 from Blattella germanica (German cockroach).